A 370-amino-acid chain; its full sequence is D-aspartate oxidase (370 aa).

The first 18 residues, 1–18 (MPPRIIILGAGIIGLSTA), serve as a signal peptide directing secretion. FAD-binding residues include I13, E42, A63, S64, and G68. Residue N207 is glycosylated (N-linked (GlcNAc...) asparagine). Residues R308, G338, and Y339 each contribute to the FAD site.

It belongs to the DAMOX/DASOX family. As to quaternary structure, monomer. Requires FAD as cofactor.

The enzyme catalyses D-aspartate + O2 + H2O = oxaloacetate + H2O2 + NH4(+). It carries out the reaction D-glutamate + O2 + H2O = H2O2 + 2-oxoglutarate + NH4(+). In terms of biological role, selectively catalyzes the oxidative deamination of acidic amino acids. Protects the organism from the toxicity of D-amino acids. Enables the organism to utilize D-amino acids as a source of nutrients. The protein is D-aspartate oxidase of Talaromyces thermophilus.